Here is a 355-residue protein sequence, read N- to C-terminus: Erythronate-4-phosphate dehydrogenase (355 aa).

Residues S45 and T66 each contribute to the substrate site. D146 is a binding site for NAD(+). The active site involves R206. Position 229 (D229) interacts with NAD(+). The active site involves E234. The active-site Proton donor is the H251. G254 provides a ligand contact to NAD(+). Y255 lines the substrate pocket.

The protein belongs to the D-isomer specific 2-hydroxyacid dehydrogenase family. PdxB subfamily. Homodimer.

Its subcellular location is the cytoplasm. It carries out the reaction 4-phospho-D-erythronate + NAD(+) = (R)-3-hydroxy-2-oxo-4-phosphooxybutanoate + NADH + H(+). The protein operates within cofactor biosynthesis; pyridoxine 5'-phosphate biosynthesis; pyridoxine 5'-phosphate from D-erythrose 4-phosphate: step 2/5. In terms of biological role, catalyzes the oxidation of erythronate-4-phosphate to 3-hydroxy-2-oxo-4-phosphonooxybutanoate. The chain is Erythronate-4-phosphate dehydrogenase from Acinetobacter baumannii (strain SDF).